The chain runs to 1045 residues: Desmoglein-1 (1045 aa).

An N-terminal signal peptide occupies residues 1-23 (MNWPFFRTAAVLFIFLVVLEVNS). Positions 24–49 (EFRIQVRDYNTKNGTIKWHSIRRQKR) are excised as a propeptide. Asparagine 36, asparagine 110, and asparagine 180 each carry an N-linked (GlcNAc...) asparagine glycan. Cadherin domains follow at residues 50 to 158 (EWIK…PVFS), 159 to 270 (MSTF…PYME), 271 to 385 (LPSN…GSVF), and 386 to 496 (RPGS…TDGA). Residues 50-546 (EWIKFAAACR…HPLDNVHFGP (497 aa)) are Extracellular-facing. A helical transmembrane segment spans residues 547–567 (AGIGLLIMGFLVLGLVPFLLM). The Cytoplasmic segment spans residues 568-1045 (YCDCGGAPGG…TKYSTVQYTK (478 aa)). Desmoglein repeat repeat units lie at residues 814–840 (TYPS…TMTE), 841–870 (SYTT…ERVV), 871–900 (GPIS…ERVI), 901–928 (APNS…ERVI), and 929–957 (RPTS…ERVV). The tract at residues 1019–1045 (FSNTLGSASPTTTRSRITKYSTVQYTK) is disordered. Polar residues predominate over residues 1020–1045 (SNTLGSASPTTTRSRITKYSTVQYTK).

Binds to JUP/plakoglobin. Interacts with PKP2. Interacts with DSC3; there is evidence to suggest that the interaction promotes cell-cell adhesion of keratinocytes.

It localises to the cell membrane. Its subcellular location is the cell junction. The protein localises to the desmosome. It is found in the cytoplasm. The protein resides in the nucleus. Its function is as follows. Component of intercellular desmosome junctions. Involved in the interaction of plaque proteins and intermediate filaments mediating cell-cell adhesion. This chain is Desmoglein-1 (DSG1), found in Sus scrofa (Pig).